A 43-amino-acid chain; its full sequence is Potassium channel toxin gamma-KTx 3.2 (43 aa).

4 disulfides stabilise this stretch: cysteine 5/cysteine 23, cysteine 11/cysteine 34, cysteine 20/cysteine 39, and cysteine 24/cysteine 41.

Belongs to the ergtoxin family. Gamma-KTx 3 subfamily. As to expression, expressed by the venom gland.

It is found in the secreted. Its function is as follows. Blocks Kv11/ERG potassium channels. The chain is Potassium channel toxin gamma-KTx 3.2 from Centruroides elegans (Bark scorpion).